The sequence spans 587 residues: Kelch-like protein 3 (587 aa).

Position 10 is a phosphoserine (serine 10). The 68-residue stretch at cysteine 50–glutamate 117 folds into the BTB domain. A BACK domain is found at cysteine 152–glutamate 254. The residue at position 295 (threonine 295) is a Phosphothreonine. Kelch repeat units lie at residues valine 302–glycine 347, histidine 348–aspartate 394, leucine 396–glycine 441, lysine 442–glycine 490, glutamine 491–glycine 537, and leucine 539–lysine 585. Threonine 375 bears the Phosphothreonine mark. 2 positions are modified to phosphoserine: serine 376 and serine 433.

The protein belongs to the KLHL3 family. In terms of assembly, homodimer. Component of the BCR(KLHL3) E3 ubiquitin ligase complex, at least composed of CUL3 and KLHL3 and RBX1. Interacts with CLDN8. Post-translationally, phosphorylation at Ser-433 by PKA or PKC decreases the interaction with WNK1 and WNK4, leading to inhibit their degradation by the BCR(KLHL3) complex. Phosphorylated at Ser-433 by PKC in response to angiotensin II signaling, decreasing ability to promote degradation of WNK1 and WNK4, leading to activation of Na-Cl cotransporter SLC12A3/NCC. Phosphorylation at Ser-433 is increased by insulin. Dephosphorylated at Ser-433 by calcineurin PPP3CA, promoting degradation of WNK1 and WNK4.

The protein resides in the cytoplasm. Its subcellular location is the cytoskeleton. The protein localises to the cytosol. It participates in protein modification; protein ubiquitination. Functionally, substrate-specific adapter of a BCR (BTB-CUL3-RBX1) E3 ubiquitin ligase complex that acts as a regulator of ion transport in the distal nephron. The BCR(KLHL3) complex acts by mediating ubiquitination and degradation of WNK1 and WNK4, two activators of Na-Cl cotransporter SLC12A3/NCC in distal convoluted tubule cells of kidney, thereby regulating NaCl reabsorption. The BCR(KLHL3) complex also mediates ubiquitination and degradation of WNK3. The BCR(KLHL3) complex also mediates ubiquitination of CLDN8, a tight-junction protein required for paracellular chloride transport in the kidney, leading to its degradation. The chain is Kelch-like protein 3 (KLHL3) from Pongo abelii (Sumatran orangutan).